The sequence spans 719 residues: MNKDGIKNLTVVEAERELEWLAKEIARHDVLYNRDDQPEISDAEYDALRRRNAEIEALFPELIRVDSPSHKIGAAISEKFEKSVHAQPMLSLDNAFSAEDVYEFVERIRRFLRLPETQVLEITAEPKIDGLSLSLRYEKGRLVRAATRGDGTVGENVTANARTIADIPQVLQGDFPDVIEVRGEVYMGREDFQALNISQQEKGKLTFANPRNAAAGSLRQLDSRITASRKLQFFAYACGEVSEIFAESQMEMMTKLKEYGFVINPLTKVFKTVEDIISYYRDIEERRYSLNYDIDGIVYKVNDLMLQKRLGFVSRSPRWAIAHKFPAEKAMALLEDIDIQVGRTGALTPVARLTPITIGGVVVTNASLHNEDYIKGIGHKGEPIREGRDIRIGDTVIIQRAGDVIPQVVDIVLEKRQKDSSAFVFPDLCPACGSHAVREVGEAVRRCTGGLICPAQAIERIRHFVARNAFDIEGLGKKQVEFFFHAQDEALCIHTPADIFTLERRQEKSLIRLENIEGFGTVSVRKLYDAINARREIPLSRFLFALGIRHVGEVNARRLARAYQTYTAFETAAMEALMPCKQDNKEGNEAWMELTNIEGIGPQVGSAIVDFYQEAHNREVLAVLLEEITPLDEVPIMTASSPIAEKIIVFTGTLAHMSRDEAKALAERLGAKTSGSLSKKTDLLVAGPGAGSKLTKAQEFGVQVIDEEAWMRLIKGHNI.

NAD(+) is bound by residues Asp42–Asp46, Ser91–Leu92, and Glu125. Residue Lys127 is the N6-AMP-lysine intermediate of the active site. NAD(+)-binding residues include Arg148, Glu184, Lys300, and Lys324. Positions 429, 432, 447, and 453 each coordinate Zn(2+). The BRCT domain maps to Thr638–Ile719.

It belongs to the NAD-dependent DNA ligase family. LigA subfamily. It depends on Mg(2+) as a cofactor. Mn(2+) is required as a cofactor.

The catalysed reaction is NAD(+) + (deoxyribonucleotide)n-3'-hydroxyl + 5'-phospho-(deoxyribonucleotide)m = (deoxyribonucleotide)n+m + AMP + beta-nicotinamide D-nucleotide.. In terms of biological role, DNA ligase that catalyzes the formation of phosphodiester linkages between 5'-phosphoryl and 3'-hydroxyl groups in double-stranded DNA using NAD as a coenzyme and as the energy source for the reaction. It is essential for DNA replication and repair of damaged DNA. This chain is DNA ligase, found in Bartonella tribocorum (strain CIP 105476 / IBS 506).